A 505-amino-acid polypeptide reads, in one-letter code: NADH-quinone oxidoreductase subunit N 1 (505 aa).

Helical transmembrane passes span 18-38 (LIPEIALGCLALLLLVVEMVL), 45-65 (LIATIAIIGQFGILGWVAWDF), 84-104 (YVGQAMRVFFLLSSIFVSILA), 116-136 (IEFYHIVLVATAAMMLLAQAN), 138-158 (FVLFFVALETLTVGLYILVSY), 173-193 (LIMGALSSSLLLFGIVLLYGV), 223-243 (FLAAAGIVLVLSGIAFKIGAF), 271-291 (AGFAILLVLVNSVFGPYWWLV), 292-312 (QPVLVAMAVATILFGNIAALT), 319-339 (LIGLSGVSHAGFLLIGIIASH), 345-365 (VGAVLFYLFAYLLATFAVFGV), 391-411 (FLAAILAVALGSLAGIPPLAG), 429-449 (GLLAVAIVGVVISIYYYFGWI), and 473-493 (VGAAAGVALATLALCSILFGV).

Belongs to the complex I subunit 2 family. In terms of assembly, NDH-1 is composed of 14 different subunits. Subunits NuoA, H, J, K, L, M, N constitute the membrane sector of the complex.

It is found in the cell inner membrane. The enzyme catalyses a quinone + NADH + 5 H(+)(in) = a quinol + NAD(+) + 4 H(+)(out). Its function is as follows. NDH-1 shuttles electrons from NADH, via FMN and iron-sulfur (Fe-S) centers, to quinones in the respiratory chain. The immediate electron acceptor for the enzyme in this species is believed to be ubiquinone. Couples the redox reaction to proton translocation (for every two electrons transferred, four hydrogen ions are translocated across the cytoplasmic membrane), and thus conserves the redox energy in a proton gradient. The chain is NADH-quinone oxidoreductase subunit N 1 from Opitutus terrae (strain DSM 11246 / JCM 15787 / PB90-1).